Here is a 111-residue protein sequence, read N- to C-terminus: Probable 4-amino-4-deoxy-L-arabinose-phosphoundecaprenol flippase subunit ArnE (111 aa).

The Cytoplasmic portion of the chain corresponds to 1 to 35; that stretch reads MIWLTLVFASLLSVAGQLCQKQATCFVAINKRRKH. Residues 36–56 traverse the membrane as a helical segment; that stretch reads IVLWLGLALACLGLAMVLWLL. The 70-residue stretch at 40-109 folds into the EamA domain; sequence LGLALACLGL…IIGGIVILGS (70 aa). Over 57-60 the chain is Periplasmic; that stretch reads VLQN. A helical membrane pass occupies residues 61-81; sequence VPVGIAYPMLSLNFVWVTLAA. The Cytoplasmic portion of the chain corresponds to 82 to 87; it reads VKLWHE. A helical membrane pass occupies residues 88 to 108; it reads PVSPRHWCGVAFIIGGIVILG. At 109-111 the chain is on the periplasmic side; the sequence is STV.

It belongs to the ArnE family. Heterodimer of ArnE and ArnF.

Its subcellular location is the cell inner membrane. Its pathway is bacterial outer membrane biogenesis; lipopolysaccharide biosynthesis. Its function is as follows. Translocates 4-amino-4-deoxy-L-arabinose-phosphoundecaprenol (alpha-L-Ara4N-phosphoundecaprenol) from the cytoplasmic to the periplasmic side of the inner membrane. The chain is Probable 4-amino-4-deoxy-L-arabinose-phosphoundecaprenol flippase subunit ArnE from Escherichia coli (strain ATCC 8739 / DSM 1576 / NBRC 3972 / NCIMB 8545 / WDCM 00012 / Crooks).